Here is a 283-residue protein sequence, read N- to C-terminus: 5'-nucleotidase SurE (283 aa).

Positions 14, 15, 47, and 105 each coordinate a divalent metal cation.

The protein belongs to the SurE nucleotidase family. A divalent metal cation serves as cofactor.

The protein resides in the cytoplasm. The catalysed reaction is a ribonucleoside 5'-phosphate + H2O = a ribonucleoside + phosphate. Functionally, nucleotidase that shows phosphatase activity on nucleoside 5'-monophosphates. In Chlamydia muridarum (strain MoPn / Nigg), this protein is 5'-nucleotidase SurE.